The primary structure comprises 590 residues: Muscarinic acetylcholine receptor M3 (590 aa).

Over 1 to 67 (MTLHNNNTTS…DPLGGHTIWQ (67 aa)) the chain is Extracellular. 6 N-linked (GlcNAc...) asparagine glycosylation sites follow: asparagine 6, asparagine 7, asparagine 15, asparagine 41, asparagine 48, and asparagine 53. The chain crosses the membrane as a helical span at residues 68 to 91 (VVFIAFLTGILALVTIIGNILVIV). The Cytoplasmic segment spans residues 92–104 (AFKVNKQLKTVNN). Residues 105 to 130 (YFLLSLACADLIIGVISMNLFTTYII) form a helical membrane-spanning segment. Residues 131–142 (MNRWALGNLACD) lie on the Extracellular side of the membrane. Cysteine 141 and cysteine 221 are disulfide-bonded. A helical membrane pass occupies residues 143 to 164 (LWLSIDYVASNASVMNLLVISF). At 165–184 (DRYFSITRPLTYRAKRTTKR) the chain is on the cytoplasmic side. A helical membrane pass occupies residues 185-206 (AGVMIGLAWVISFILWAPAILF). Residues 207-229 (WQYFVGKRTVPPGECFIQFLSEP) are Extracellular-facing. Residues 230-252 (TITFGTAIAAFYMPVTIMTILYW) form a helical membrane-spanning segment. The Cytoplasmic portion of the chain corresponds to 253–491 (RIYKETEKRT…SLIKEKKAAQ (239 aa)). Residues 275 to 281 (AEAENFV) carry the Basolateral sorting signal motif. Positions 324-357 (AEQMDQDHSSSDSWNNNDAAASLENSASSDEEDI) are disordered. The span at 334 to 345 (SDSWNNNDAAAS) shows a compositional bias: low complexity. Serine 385 carries the post-translational modification Phosphoserine. A helical membrane pass occupies residues 492 to 514 (TLSAILLAFIITWTPYNIMVLVN). At 515 to 526 (TFCDSCIPKTYW) the chain is on the extracellular side. Cysteine 517 and cysteine 520 are joined by a disulfide. A helical transmembrane segment spans residues 527 to 546 (NLGYWLCYINSTVNPVCYAL). The Cytoplasmic portion of the chain corresponds to 547-590 (CNKTFRTTFKMLLLCQCDKRKRRKQQYQQRQSVIFHKRVPEQAL).

It belongs to the G-protein coupled receptor 1 family. Muscarinic acetylcholine receptor subfamily. CHRM3 sub-subfamily. Homodimer; the dimers can form tetramers. Interacts with NALCN. Interacts with TMEM147.

It localises to the cell membrane. The protein resides in the postsynaptic cell membrane. Its subcellular location is the basolateral cell membrane. It is found in the endoplasmic reticulum membrane. Its function is as follows. The muscarinic acetylcholine receptor mediates various cellular responses, including inhibition of adenylate cyclase, breakdown of phosphoinositides and modulation of potassium channels through the action of G proteins. Primary transducing effect is Pi turnover. The protein is Muscarinic acetylcholine receptor M3 (CHRM3) of Sus scrofa (Pig).